We begin with the raw amino-acid sequence, 508 residues long: Photosystem II CP47 reaction center protein (508 aa).

6 helical membrane passes run 21–36 (SVHIMHTALVAGWAGS), 101–115 (IVFSGLCFLAAIWHW), 140–156 (GIHLFLSGVACFGFGAF), 203–218 (IAAGTLGILAGLFHLS), 237–252 (VLSSSIAAVFFAAFVV), and 457–472 (SFALLFFFGHIWHGSR).

This sequence belongs to the PsbB/PsbC family. PsbB subfamily. PSII is composed of 1 copy each of membrane proteins PsbA, PsbB, PsbC, PsbD, PsbE, PsbF, PsbH, PsbI, PsbJ, PsbK, PsbL, PsbM, PsbT, PsbX, PsbY, PsbZ, Psb30/Ycf12, at least 3 peripheral proteins of the oxygen-evolving complex and a large number of cofactors. It forms dimeric complexes. Binds multiple chlorophylls. PSII binds additional chlorophylls, carotenoids and specific lipids. serves as cofactor.

Its subcellular location is the plastid. It is found in the chloroplast thylakoid membrane. Functionally, one of the components of the core complex of photosystem II (PSII). It binds chlorophyll and helps catalyze the primary light-induced photochemical processes of PSII. PSII is a light-driven water:plastoquinone oxidoreductase, using light energy to abstract electrons from H(2)O, generating O(2) and a proton gradient subsequently used for ATP formation. The polypeptide is Photosystem II CP47 reaction center protein (Lepidium virginicum (Virginia pepperweed)).